The primary structure comprises 381 residues: Mannitol-1-phosphate 5-dehydrogenase (381 aa).

Ala-3 to Gly-14 is an NAD(+) binding site.

This sequence belongs to the mannitol dehydrogenase family.

It catalyses the reaction D-mannitol 1-phosphate + NAD(+) = beta-D-fructose 6-phosphate + NADH + H(+). The chain is Mannitol-1-phosphate 5-dehydrogenase from Exiguobacterium sibiricum (strain DSM 17290 / CCUG 55495 / CIP 109462 / JCM 13490 / 255-15).